The sequence spans 181 residues: Malignant T-cell-amplified sequence 1-A (181 aa).

One can recognise a PUA domain in the interval 92–171 (LPHQQVDKGA…IGIENIHYLN (80 aa)).

Belongs to the MCTS1 family.

The protein localises to the cytoplasm. Functionally, plays a role as translation enhancer and involved in cell cycle regulation. The sequence is that of Malignant T-cell-amplified sequence 1-A (mcts1-a) from Xenopus laevis (African clawed frog).